A 166-amino-acid polypeptide reads, in one-letter code: uncharacterized protein (166 aa).

Over residues 73–88 (SKLNNNNNSNNNNKMA) the composition is skewed to low complexity. 2 disordered regions span residues 73–101 (SKLN…EKDK) and 126–166 (PQSS…EFNN). Residues 89 to 101 (VDNKDNKDNEKDK) are compositionally biased toward basic and acidic residues. A compositionally biased stretch (low complexity) spans 134-154 (SPTHKSPSSSPKTISPVKVSP). The span at 155–166 (TSSPIKNPEFNN) shows a compositional bias: polar residues.

This is an uncharacterized protein from Dictyostelium discoideum (Social amoeba).